A 340-amino-acid polypeptide reads, in one-letter code: MAIRITFTYSTHVARNLVGTRVGPGGYCFESLVRPRFFSHKRDFDRSPRNRPASMYGSIARELIGEGSQSPLVMGLISILKSTTGHESSTMNVLGVSSFKASSIIPFLQGSKWIKNPPVIDDVDKGGTVCDDDDDKESRNGGSGWVNKLLSVCSEDAKAAFTAVTVSILFRSALAEPKSIPSTSMYPTLDKGDRVMAEKVSYFFRKPEVSDIVIFKAPPILLEYPEYGYSSNDVFIKRIVASEGDWVEVRDGKLFVNDIVQEEDFVLEPMSYEMEPMFVPKGYVFVLGDNRNKSFDSHNWGPLPIENIVGRSVFRYWPPSKVSDTIYHDQAITRGPVAVS.

Residues 1 to 52 (MAIRITFTYSTHVARNLVGTRVGPGGYCFESLVRPRFFSHKRDFDRSPRNRP) constitute a chloroplast transit peptide. The chain crosses the membrane as a helical span at residues 155–175 (EDAKAAFTAVTVSILFRSALA). Residues 176-340 (EPKSIPSTSM…AITRGPVAVS (165 aa)) lie on the Lumenal, thylakoid side of the membrane. S184 is an active-site residue.

The protein belongs to the peptidase S26 family.

The protein resides in the plastid. It localises to the chloroplast thylakoid membrane. The enzyme catalyses Cleavage of hydrophobic, N-terminal signal or leader sequences from secreted and periplasmic proteins.. In terms of biological role, cleaves the thylakoid-transfer domain from a chloroplast protein. The chain is Thylakoidal processing peptidase 1, chloroplastic (TPP1) from Arabidopsis thaliana (Mouse-ear cress).